The sequence spans 270 residues: Putative phosphoenolpyruvate synthase regulatory protein (270 aa).

Position 150-157 (glycine 150–threonine 157) interacts with ADP.

It belongs to the pyruvate, phosphate/water dikinase regulatory protein family. PSRP subfamily.

The enzyme catalyses [pyruvate, water dikinase] + ADP = [pyruvate, water dikinase]-phosphate + AMP + H(+). It carries out the reaction [pyruvate, water dikinase]-phosphate + phosphate + H(+) = [pyruvate, water dikinase] + diphosphate. Its function is as follows. Bifunctional serine/threonine kinase and phosphorylase involved in the regulation of the phosphoenolpyruvate synthase (PEPS) by catalyzing its phosphorylation/dephosphorylation. This Cupriavidus metallidurans (strain ATCC 43123 / DSM 2839 / NBRC 102507 / CH34) (Ralstonia metallidurans) protein is Putative phosphoenolpyruvate synthase regulatory protein.